A 948-amino-acid chain; its full sequence is Non-lysosomal glucosylceramidase (948 aa).

The Extracellular portion of the chain corresponds to 1 to 736 (MAEPLAVETK…VMDGPSAYCS (736 aa)). Residues 177-195 (STRDKTSDPDGDPDGERTK) are compositionally biased toward basic and acidic residues. The segment at 177-197 (STRDKTSDPDGDPDGERTKCQ) is disordered. N-linked (GlcNAc...) asparagine glycosylation is present at Asn200. Phosphoserine is present on Ser214. 3 N-linked (GlcNAc...) asparagine glycosylation sites follow: Asn288, Asn555, and Asn629. Phosphoserine occurs at positions 667 and 669. A glycan (N-linked (GlcNAc...) asparagine) is linked at Asn673. The chain crosses the membrane as a helical span at residues 737–753 (GLWLAALQAMSAMATIL). The Cytoplasmic portion of the chain corresponds to 754–948 (DQPNDCLRYQ…ALERRRAQRD (195 aa)).

Belongs to the non-lysosomal glucosylceramidase family.

It localises to the cell membrane. The catalysed reaction is a beta-D-glucosyl-(1&lt;-&gt;1')-N-acylsphing-4-enine + H2O = an N-acylsphing-4-enine + D-glucose. Functionally, non-lysosomal glucosylceramidase that catalyzes the conversion of glucosylceramide to free glucose and ceramide. The sequence is that of Non-lysosomal glucosylceramidase from Drosophila melanogaster (Fruit fly).